A 1400-amino-acid chain; its full sequence is DNA-directed RNA polymerase subunit beta' (1400 aa).

Residues Cys71, Cys73, Cys86, and Cys89 each contribute to the Zn(2+) site. Mg(2+) is bound by residues Asp462, Asp464, and Asp466. Zn(2+) is bound by residues Cys810, Cys884, Cys891, and Cys894.

This sequence belongs to the RNA polymerase beta' chain family. The RNAP catalytic core consists of 2 alpha, 1 beta, 1 beta' and 1 omega subunit. When a sigma factor is associated with the core the holoenzyme is formed, which can initiate transcription. It depends on Mg(2+) as a cofactor. The cofactor is Zn(2+).

It catalyses the reaction RNA(n) + a ribonucleoside 5'-triphosphate = RNA(n+1) + diphosphate. Functionally, DNA-dependent RNA polymerase catalyzes the transcription of DNA into RNA using the four ribonucleoside triphosphates as substrates. In Rhodopseudomonas palustris (strain BisA53), this protein is DNA-directed RNA polymerase subunit beta'.